Reading from the N-terminus, the 415-residue chain is Histidine--tRNA ligase (415 aa).

This sequence belongs to the class-II aminoacyl-tRNA synthetase family. Homodimer.

It is found in the cytoplasm. It carries out the reaction tRNA(His) + L-histidine + ATP = L-histidyl-tRNA(His) + AMP + diphosphate + H(+). This is Histidine--tRNA ligase from Clostridium botulinum (strain ATCC 19397 / Type A).